The sequence spans 236 residues: 2,3,4,5-tetrahydropyridine-2,6-dicarboxylate N-acetyltransferase (236 aa).

It belongs to the transferase hexapeptide repeat family. DapH subfamily.

The catalysed reaction is (S)-2,3,4,5-tetrahydrodipicolinate + acetyl-CoA + H2O = L-2-acetamido-6-oxoheptanedioate + CoA. The protein operates within amino-acid biosynthesis; L-lysine biosynthesis via DAP pathway; LL-2,6-diaminopimelate from (S)-tetrahydrodipicolinate (acetylase route): step 1/3. Catalyzes the transfer of an acetyl group from acetyl-CoA to tetrahydrodipicolinate. The polypeptide is 2,3,4,5-tetrahydropyridine-2,6-dicarboxylate N-acetyltransferase (Oceanobacillus iheyensis (strain DSM 14371 / CIP 107618 / JCM 11309 / KCTC 3954 / HTE831)).